The sequence spans 305 residues: MQHPREENSIVVELEPSLATFIKQGFNNLVKWPLLNIGIVLSNTSTAVNEEWLTAVEHIPTMKIFYKHIHKILTREMGFLVYLKRSQSERDNYITLYDFDYYIIDKDTNSVTMVDKPTELKETLLHVFQEYRLKSSQTIELIAFSSGTVINEDIVSKLTFLDVEVFNREYNNVKTIIDPDFVFRSPFIVISPMGKLTFFVEVYSWFDFKSCFKDIIDFLEGALIANIHNHMIKVGDCDETVSSYNPESGMLFVNDLMTMNIVNFFGCNSRLESYHRFDMTKVDVELFIKALSDACKKILSASNRL.

It belongs to the poxviridae DNA-directed RNA polymerase 35 kDa subunit family. In terms of assembly, the DNA-dependent RNA polymerase used for intermediate and late genes expression consists of eight subunits 147 kDa, 133 kDa, 35 kDa, 30 kDa, 22 kDa, 19 kDa, 18 kDa and 7 kDa totalling more than 500 kDa in mass. The same holoenzyme, with the addition of the transcription-specificity factor RAP94, is used for early gene expression.

It localises to the virion. The catalysed reaction is RNA(n) + a ribonucleoside 5'-triphosphate = RNA(n+1) + diphosphate. Functionally, part of the DNA-dependent RNA polymerase which catalyzes the transcription of viral DNA into RNA using the four ribonucleoside triphosphates as substrates. Responsible for the transcription of early, intermediate and late genes. DNA-dependent RNA polymerase associates with the early transcription factor (ETF), itself composed of D6 and A7, thereby allowing the early genes transcription. Late transcription, and probably also intermediate transcription, require newly synthesized RNA polymerase. The sequence is that of DNA-directed RNA polymerase 35 kDa subunit (OPG156) from Homo sapiens (Human).